The sequence spans 295 residues: 2-dehydropantoate 2-reductase (295 aa).

NADP(+) is bound by residues 9-14, Asn-100, and Ala-126; that span reads GPGAVG. Asn-100 provides a ligand contact to substrate. The active-site Proton donor is Lys-177. Asn-181 and Ser-246 together coordinate substrate. Residue Glu-258 coordinates NADP(+).

Belongs to the ketopantoate reductase family.

The protein resides in the cytoplasm. It carries out the reaction (R)-pantoate + NADP(+) = 2-dehydropantoate + NADPH + H(+). Its pathway is cofactor biosynthesis; (R)-pantothenate biosynthesis; (R)-pantoate from 3-methyl-2-oxobutanoate: step 2/2. Catalyzes the NADPH-dependent reduction of ketopantoate into pantoic acid. This Mycobacterium tuberculosis (strain CDC 1551 / Oshkosh) protein is 2-dehydropantoate 2-reductase.